Consider the following 237-residue polypeptide: Ras-related protein Rab-33A (237 aa).

Residues Asn-46, Val-47, Gly-48, Lys-49, Thr-50, Cys-51, Thr-65, and Thr-68 each coordinate GTP. Thr-50 contacts Mg(2+). Positions 59 to 71 (GTFPDKTEATIGV) match the Switch 1 motif. Mg(2+) contacts are provided by Thr-68 and Asp-91. The short motif at 92 to 111 (TAGQERFRKSMVEHYYRNVH) is the Switch 2 element. GTP contacts are provided by Gly-94, Asn-151, Lys-152, Asp-154, Ala-182, and Lys-183. 2 S-geranylgeranyl cysteine lipidation sites follow: Cys-235 and Cys-237. Cysteine methyl ester is present on Cys-237.

The protein belongs to the small GTPase superfamily. Rab family. In terms of assembly, interacts with ATG16L1; the interaction is important for autophagosome formation. Requires Mg(2+) as cofactor. As to expression, expressed predominantly in brain. Weak expression in ovary.

Its subcellular location is the cell membrane. It catalyses the reaction GTP + H2O = GDP + phosphate + H(+). Regulated by guanine nucleotide exchange factors (GEFs) which promote the exchange of bound GDP for free GTP. Regulated by GTPase activating proteins (GAPs) which increase the GTP hydrolysis activity. Inhibited by GDP dissociation inhibitors (GDIs). In terms of biological role, the small GTPases Rab are key regulators of intracellular membrane trafficking, from the formation of transport vesicles to their fusion with membranes. Rabs cycle between an inactive GDP-bound form and an active GTP-bound form that is able to recruit to membranes different sets of downstream effectors directly responsible for vesicle formation, movement, tethering and fusion. Modulates autophagosome formation through interaction with ATG16L1. This Mus musculus (Mouse) protein is Ras-related protein Rab-33A.